Consider the following 305-residue polypeptide: Ankyrin repeat domain-containing protein 23 (305 aa).

Residues 41-72 are a coiled coil; that stretch reads QEAVAREKLKLEEEKKKKLERFNSTRFNLDNL. Residues 83 to 92 show a composition bias toward basic residues; sequence KKRLRHRVPP. Residues 83 to 104 are disordered; sequence KKRLRHRVPPRKPEPLVKPQSQ. ANK repeat units lie at residues 143 to 172, 176 to 205, 209 to 238, and 242 to 271; these read LHRTALHWACLKGHSQLVNKLLVAGATVDA, LDRTPVFWACRGGHLVILKQLLNQGARVNA, IGSTPLHVAVRTRHPDCLEHLIECGAHLNA, and EGDTALHEAVRHGSYKAMKLLLLYGAELGV. The segment at 178–195 is interaction with TTN; the sequence is RTPVFWACRGGHLVILKQ.

In terms of assembly, interacts with titin/TTN and MYPN. In terms of tissue distribution, mainly expressed in heart, skeletal muscle and brown adipose tissues.

The protein localises to the nucleus. In terms of biological role, may be involved in the energy metabolism. Could be a molecular link between myofibrillar stretch-induced signaling pathways and muscle gene expression. The protein is Ankyrin repeat domain-containing protein 23 (ANKRD23) of Homo sapiens (Human).